Here is a 148-residue protein sequence, read N- to C-terminus: Large ribosomal subunit protein uL15 (148 aa).

Residues 1–30 are compositionally biased toward basic residues; it reads MPSRLRKTRKLRGHVSHGHGRIGKHRKHPG. The interval 1 to 38 is disordered; sequence MPSRLRKTRKLRGHVSHGHGRIGKHRKHPGGRGNAGGL. Position 39 is a (3S)-3-hydroxyhistidine (H39). Residues K47 and K55 each carry the N6-acetyllysine modification. S68 is modified (phosphoserine). K110 carries the post-translational modification N6-acetyllysine.

This sequence belongs to the universal ribosomal protein uL15 family. Post-translationally, hydroxylated on His-39 by MINA.

The sequence is that of Large ribosomal subunit protein uL15 (RPL27A) from Pan troglodytes (Chimpanzee).